A 219-amino-acid polypeptide reads, in one-letter code: Adenylate kinase (219 aa).

Residue 10 to 15 participates in ATP binding; sequence GAGKGT. The interval 30 to 59 is NMP; the sequence is STGDMLRAAVKAGTPLGQQAKKVMDAGELV. AMP contacts are provided by residues Thr31, Arg36, 57–59, 85–88, and Gln92; these read ELV and GFPR. Positions 122-159 are LID; the sequence is GRRVHPGSGRVYHVEHNPPKEEGKDDVTGEPLVQRDDD. ATP-binding positions include Arg123 and 132 to 133; that span reads VY. The interval 129–152 is disordered; sequence SGRVYHVEHNPPKEEGKDDVTGEP. Basic and acidic residues predominate over residues 133–152; sequence YHVEHNPPKEEGKDDVTGEP. AMP-binding residues include Arg156 and Arg167. Gly203 contacts ATP.

This sequence belongs to the adenylate kinase family. Monomer.

It is found in the cytoplasm. The catalysed reaction is AMP + ATP = 2 ADP. It participates in purine metabolism; AMP biosynthesis via salvage pathway; AMP from ADP: step 1/1. Functionally, catalyzes the reversible transfer of the terminal phosphate group between ATP and AMP. Plays an important role in cellular energy homeostasis and in adenine nucleotide metabolism. The sequence is that of Adenylate kinase from Alkalilimnicola ehrlichii (strain ATCC BAA-1101 / DSM 17681 / MLHE-1).